Reading from the N-terminus, the 833-residue chain is Leucine--tRNA ligase (833 aa).

Residues 41 to 52 (PYPSGAGLHVGH) carry the 'HIGH' region motif. The short motif at 610–614 (KMSKS) is the 'KMSKS' region element. Position 613 (Lys613) interacts with ATP.

This sequence belongs to the class-I aminoacyl-tRNA synthetase family.

The protein localises to the cytoplasm. It carries out the reaction tRNA(Leu) + L-leucine + ATP = L-leucyl-tRNA(Leu) + AMP + diphosphate. The polypeptide is Leucine--tRNA ligase (Streptococcus agalactiae serotype III (strain NEM316)).